Consider the following 118-residue polypeptide: Large ribosomal subunit protein bL20 (118 aa).

Belongs to the bacterial ribosomal protein bL20 family.

Binds directly to 23S ribosomal RNA and is necessary for the in vitro assembly process of the 50S ribosomal subunit. It is not involved in the protein synthesizing functions of that subunit. The chain is Large ribosomal subunit protein bL20 from Shigella dysenteriae serotype 1 (strain Sd197).